The sequence spans 886 residues: Vam6/Vps39-like protein (886 aa).

In terms of domain architecture, CNH spans 15–294 (PLQIDCLAAW…RFITSGGSNI (280 aa)). One copy of the CHCR repeat lies at 573–750 (FTEDLPEVES…LLRMYLSPPS (178 aa)).

This sequence belongs to the VAM6/VPS39 family. As to quaternary structure, homooligomer. Interacts with TGFBR2 and, less efficiently, with TGFBR1; interaction with TGFBR2 is independent of the receptor kinase activity and of the presence of TGF-beta. Also interacts with ACVR2B, but not with BMPR2. Interacts with SMAD4, preferentially following TGF-beta treatment. Does not interact with SAMD2 or SMAD3. Component of the homotypic fusion and vacuole protein sorting (HOPS) complex; the core of which composed of the class C Vps proteins VPS11, VPS16, VPS18 and VPS33A, is associated with VPS39 and VPS41. Interacts with PLEKHM2; involved in VPS39 recruitment to ARL8B-containing lysosomes. Associates with adapter protein complex 3 (AP-3) and clathrin:AP-3 complexes. Interacts with STX17; this interaction is increased in the absence of TMEM39A. Interacts with RAB7, RAB2A and RAB2B. Interacts with RAB2A (GTP-bound); the interaction contributes to obtaining a functional HOPS complex that promotes autophagosome-lysosome membrane fusion driven by STX17-SNAP29-VAMP8. Interacts with RAB39A (GTP-bound) and RAB39B (GTP-bound); interaction with RAB39A contributes to obtaining a functional HOPS complex. In terms of assembly, (Microbial infection) Interacts with SARS coronavirus-2/SARS-CoV-2 ORF3A protein; the interaction is direct and sequestrates VPS39, thereby preventing HOPS complex from interacting with the autophagosomal SNARE protein STX17. ORF3A enhances the interaction of VPS39 with VPS11 and VPS18, while its interaction with the VPS16:VPS33A module is attenuated. Widely expressed, with highest levels in heart, skeletal muscle, kidney, pancreas, brain, placenta and spleen.

It is found in the cytoplasm. The protein resides in the lysosome membrane. The protein localises to the late endosome membrane. Functionally, regulator of TGF-beta/activin signaling, inhibiting SMAD3- and activating SMAD2-dependent transcription. Acts by interfering with SMAD3/SMAD4 complex formation, this would lead to inhibition of SMAD3-dependent transcription and relieve SMAD3 inhibition of SMAD2-dependent promoters, thus increasing SMAD2-dependent transcription. Does not affect TGF-beta-induced SMAD2 or SMAD3 phosphorylation, nor SMAD2/SMAD4 complex formation. Its function is as follows. Plays a role in vesicle-mediated protein trafficking to lysosomal compartments including the endocytic membrane transport and autophagic pathways. Acts as a component of the HOPS endosomal tethering complex. This complex is proposed to be involved in the Rab5-to-Rab7 endosome conversion probably implicating MON1A/B, and via binding SNAREs and SNARE complexes to mediate tethering and docking events during SNARE-mediated membrane fusion. The HOPS complex is proposed to be recruited to Rab7 on the late endosomal membrane and to regulate late endocytic, phagocytic and autophagic traffic towards lysosomes. Involved in homotypic vesicle fusions between late endosomes and in heterotypic fusions between late endosomes and lysosomes. Required for fusion of endosomes and autophagosomes with lysosomes. This is Vam6/Vps39-like protein from Homo sapiens (Human).